Reading from the N-terminus, the 229-residue chain is MAKLIVALDYTYASEALAMANILKKHVEWVKVGLELFTHEGPSIIQLLKRMGFKVMLDLKLFDIPNTVKGSVRSACLMDVDMLTLHILGGEHMIKAALNEVQSSIQKKSHSPLLFGVTILTSIKQGELPGYNQDIASMVLNLAAYGQQWGLHGIVCSGQELTKIKALYPSLSCLTPGIRMSYSQKDDQHRVMTPSEAVKAGSDFLVIGRPITQAEQPIKIVEDIISSIM.

Substrate contacts are provided by residues Asp-9, Lys-31, 58-67 (DLKLFDIPNT), Thr-121, Arg-179, Gln-188, Gly-208, and Arg-209. Lys-60 functions as the Proton donor in the catalytic mechanism.

Belongs to the OMP decarboxylase family. Type 1 subfamily. As to quaternary structure, homodimer.

The enzyme catalyses orotidine 5'-phosphate + H(+) = UMP + CO2. Its pathway is pyrimidine metabolism; UMP biosynthesis via de novo pathway; UMP from orotate: step 2/2. In terms of biological role, catalyzes the decarboxylation of orotidine 5'-monophosphate (OMP) to uridine 5'-monophosphate (UMP). This is Orotidine 5'-phosphate decarboxylase from Lawsonia intracellularis (strain PHE/MN1-00).